The following is a 275-amino-acid chain: ATP synthase subunit delta (275 aa).

The protein belongs to the ATPase delta chain family. As to quaternary structure, F-type ATPases have 2 components, F(1) - the catalytic core - and F(0) - the membrane proton channel. F(1) has five subunits: alpha(3), beta(3), gamma(1), delta(1), epsilon(1). F(0) has three main subunits: a(1), b(2) and c(10-14). The alpha and beta chains form an alternating ring which encloses part of the gamma chain. F(1) is attached to F(0) by a central stalk formed by the gamma and epsilon chains, while a peripheral stalk is formed by the delta and b chains.

The protein localises to the cell membrane. Functionally, f(1)F(0) ATP synthase produces ATP from ADP in the presence of a proton or sodium gradient. F-type ATPases consist of two structural domains, F(1) containing the extramembraneous catalytic core and F(0) containing the membrane proton channel, linked together by a central stalk and a peripheral stalk. During catalysis, ATP synthesis in the catalytic domain of F(1) is coupled via a rotary mechanism of the central stalk subunits to proton translocation. In terms of biological role, this protein is part of the stalk that links CF(0) to CF(1). It either transmits conformational changes from CF(0) to CF(1) or is implicated in proton conduction. This is ATP synthase subunit delta from Arthrobacter sp. (strain FB24).